The chain runs to 495 residues: Bile acid-sensitive ion channel (495 aa).

Residues 1–30 (MEHTEKSKGPAEKGLLGKIRRYLSKRPLPS) are binds the plasma membrane and stabilizes the channel in the closed state. The Cytoplasmic segment spans residues 1–61 (MEHTEKSKGP…NIAQNQNKVR (61 aa)). A helical transmembrane segment spans residues 62-82 (KVIWLSVVLGSVSLLVWQIYS). The Extracellular segment spans residues 83–459 (RLVNYFMWPT…GLFCGASLIT (377 aa)). Intrachain disulfides connect C112–C207, C185–C192, C298–C377, C315–C373, C328–C350, and C330–C342. Residues N147 and N163 are each glycosylated (N-linked (GlcNAc...) asparagine). Residue N306 is glycosylated (N-linked (GlcNAc...) asparagine). N370, N405, and N421 each carry an N-linked (GlcNAc...) asparagine glycan. Positions 454–456 (GAS) match the GAS motif; ion selectivity filter motif. Residues 460–480 (IIEIIEYLFTSFYWVFIFFLL) traverse the membrane as a helical segment. Residues 481 to 495 (KILEMIQRTSPPQTV) are Cytoplasmic-facing.

This sequence belongs to the amiloride-sensitive sodium channel (TC 1.A.6) family. ASIC5 subfamily. Forms homotrimeric channels. As to expression, expressed by cholangiocytes (at protein level). Detected in brain, liver, duodenum, jejunum, ileum and testis.

The protein resides in the apical cell membrane. It is found in the cell membrane. It catalyses the reaction Na(+)(in) = Na(+)(out). The enzyme catalyses Li(+)(in) = Li(+)(out). It carries out the reaction K(+)(in) = K(+)(out). The catalysed reaction is H(+)(in) = H(+)(out). Its activity is regulated as follows. Inhibited by the diuretic drug amiloride. Inhibited by diminazene. Inhibited by extracellular Ca(2+). In terms of biological role, forms bile acid-gated sodium channels and may play a role in bile acid-dependent absorption and secretion by epithelial cells of the bile ducts. Displays high selectivity for sodium ions but can also permit the permeation of other cations. The gating could be indirect and the consequence of alterations of the membrane environment of the channel by bile acids. As a sodium channel of type II unipolar brush cells of the vestibulocerebellum, controlling the electrical activity of these cells, could play a role in motor coordination and balance. The sequence is that of Bile acid-sensitive ion channel from Rattus norvegicus (Rat).